Here is a 115-residue protein sequence, read N- to C-terminus: Large ribosomal subunit protein bL20c (115 aa).

Belongs to the bacterial ribosomal protein bL20 family.

The protein resides in the plastid. It localises to the chloroplast. Binds directly to 23S ribosomal RNA and is necessary for the in vitro assembly process of the 50S ribosomal subunit. It is not involved in the protein synthesizing functions of that subunit. The sequence is that of Large ribosomal subunit protein bL20c from Gnetum parvifolium (Small-leaved jointfir).